A 311-amino-acid chain; its full sequence is uncharacterized protein (311 aa).

This is an uncharacterized protein from Sinorhizobium fredii (strain NBRC 101917 / NGR234).